We begin with the raw amino-acid sequence, 59 residues long: Large ribosomal subunit protein bL32c (59 aa).

It belongs to the bacterial ribosomal protein bL32 family.

Its subcellular location is the plastid. The protein resides in the chloroplast. This Physcomitrium patens (Spreading-leaved earth moss) protein is Large ribosomal subunit protein bL32c.